Consider the following 287-residue polypeptide: Orotidine 5'-phosphate decarboxylase (287 aa).

Lysine 97 serves as the catalytic Proton donor.

It belongs to the OMP decarboxylase family. Type 2 subfamily.

It carries out the reaction orotidine 5'-phosphate + H(+) = UMP + CO2. It functions in the pathway pyrimidine metabolism; UMP biosynthesis via de novo pathway; UMP from orotate: step 2/2. In Clostridium perfringens (strain 13 / Type A), this protein is Orotidine 5'-phosphate decarboxylase (pyrF).